The primary structure comprises 312 residues: Dehydrogenase/reductase SDR family member 7C (312 aa).

An N-terminal signal peptide occupies residues 1–18 (MGVMAMLMLPLLLLGISG). Residues Ser47, Leu49, Tyr192, Lys196, and Ser227 each coordinate NAD(+). The Proton acceptor role is filled by Tyr192.

It belongs to the short-chain dehydrogenases/reductases (SDR) family.

The protein localises to the sarcoplasmic reticulum membrane. It catalyses the reaction all-trans-retinol + NAD(+) = all-trans-retinal + NADH + H(+). In terms of biological role, NADH-dependent oxidoreductase which catalyzes the oxidation of all-trans-retinol to all-trans-retinal. Plays a role in the regulation of cardiac and skeletal muscle metabolic functions. Maintains Ca(2+) intracellular homeostasis by repressing Ca(2+) release from the sarcoplasmic reticulum (SR) in myotubes, possibly through local alternations in NAD/NADH or retinol/retinal. Also plays a role in Ca(2+) homeostasis by controlling Ca(2+) overload in the cytosol and the SR in myotubes. Involved in glucose uptake into skeletal muscles and muscle performance by activating PI3K and mTORC2-mediated AKT1 phosphorylation signaling pathways, possibly through the action of its downstream catalytic product all-trans-retinoic acid. The protein is Dehydrogenase/reductase SDR family member 7C of Homo sapiens (Human).